A 207-amino-acid chain; its full sequence is Ras-related protein Rab-7a (207 aa).

T2 is subject to N-acetylthreonine. GTP-binding residues include S17, G18, V19, G20, K21, T22, S23, S34, N35, Y37, and T40. A Mg(2+)-binding site is contributed by T22. Positions 28 to 41 match the Switch 1 motif; sequence YVNKKFSNQYKATI. Mg(2+) contacts are provided by T40 and D63. G66 is a binding site for GTP. The short motif at 67-82 is the Switch 2 element; the sequence is QERFQSLGVAFYRGAD. A Phosphoserine modification is found at S72. Residues N125, K126, D128, A156, and K157 each coordinate GTP. Residues K191 and K194 each participate in a glycyl lysine isopeptide (Lys-Gly) (interchain with G-Cter in ubiquitin) cross-link. S-geranylgeranyl cysteine attachment occurs at residues C205 and C207. C207 bears the Cysteine methyl ester mark.

It belongs to the small GTPase superfamily. Rab family. Interacts with NTRK1/TRKA. Interacts with RILP. Interacts with PSMA7. Interacts with RNF115. Interacts with and FYCO1. Interacts with the PIK3C3/VPS34-PIK3R4 complex. The GTP-bound form interacts with OSBPL1A. The GTP-bound form interacts with RAC1. Interacts with CLN3. Interacts with CHM, the substrate-binding subunit of the Rab geranylgeranyltransferase complex. Interacts with C9orf72. Does not interact with HPS4 and the BLOC-3 complex (heterodimer of HPS1 and HPS4). Interacts with CLN5. Interacts with PLEKHM1 (via N- and C-terminus). Interacts with PRPH; the interaction is direct. Interacts with VPS13A. The GDP-bound form interacts with RIMOC1. Interacts with the MON1A-CCZ1B complex and this interaction is enhanced in the presence of RIMOC1. Interacts with VPS39 and VPS41. Forms a ternary complex with LAMP2 and RUFY4; the interaction with LAMP2 is mediated by RUFY4 (via RUN and coiled coil domains). Mg(2+) is required as a cofactor. Post-translationally, deubiquitination at Lys-191 and Lys-194 by USP32. Phosphorylated at Ser-72 by LRRK1; phosphorylation is dependent on protein kinase C (PKC) activation of LRRK1. In terms of processing, prenylated. Prenylation is required for association with cellular membranes. In terms of tissue distribution, expressed in osteoclasts and in neurons.

The protein localises to the cytoplasmic vesicle. It localises to the phagosome membrane. The protein resides in the late endosome membrane. Its subcellular location is the lysosome membrane. It is found in the melanosome membrane. The protein localises to the autophagosome membrane. It localises to the lipid droplet. The protein resides in the endosome membrane. Its subcellular location is the mitochondrion membrane. The enzyme catalyses GTP + H2O = GDP + phosphate + H(+). Its activity is regulated as follows. Regulated by guanine nucleotide exchange factors (GEFs) which promote the exchange of bound GDP for free GTP. Regulated by GTPase activating proteins (GAPs) which increase the GTP hydrolysis activity. Inhibited by GDP dissociation inhibitors (GDIs). Functionally, the small GTPases Rab are key regulators of intracellular membrane trafficking, from the formation of transport vesicles to their fusion with membranes. Rabs cycle between an inactive GDP-bound form and an active GTP-bound form that is able to recruit to membranes different sets of downstream effectors directly responsible for vesicle formation, movement, tethering and fusion. In its active state, RAB7A binds to a variety of effector proteins playing a key role in the regulation of endo-lysosomal trafficking. Governs early-to-late endosomal maturation, microtubule minus-end as well as plus-end directed endosomal migration and positioning, and endosome-lysosome transport through different protein-protein interaction cascades. Also plays a central role in growth-factor-mediated cell signaling, nutrient-transporter-mediated nutrient uptake, neurotrophin transport in the axons of neurons and lipid metabolism. Also involved in regulation of some specialized endosomal membrane trafficking, such as maturation of melanosomes, pathogen-induced phagosomes (or vacuoles) and autophagosomes. Plays a role in the maturation and acidification of phagosomes that engulf pathogens, such as S.aureus and Mycobacteria. Plays a role in the fusion of phagosomes with lysosomes. In concert with RAC1, plays a role in regulating the formation of RBs (ruffled borders) in osteoclasts. Controls the endosomal trafficking and neurite outgrowth signaling of NTRK1/TRKA. Regulates the endocytic trafficking of the EGF-EGFR complex by regulating its lysosomal degradation. Involved in the ADRB2-stimulated lipolysis through lipophagy, a cytosolic lipase-independent autophagic pathway. Required for the exosomal release of SDCBP, CD63 and syndecan. Required for vesicular trafficking and cell surface expression of ACE2. May play a role in PRPH neuronal intermediate filament assembly. The polypeptide is Ras-related protein Rab-7a (Rattus norvegicus (Rat)).